A 475-amino-acid polypeptide reads, in one-letter code: Sulfate adenylyltransferase subunit 1 (475 aa).

One can recognise a tr-type G domain in the interval 25-239 (KSLLRFLTCG…EVLETVEIQR (215 aa)). A G1 region spans residues 34–41 (GSVDDGKS). Residue 34 to 41 (GSVDDGKS) coordinates GTP. Positions 92–96 (GITID) are G2. Residues 113-116 (DTPG) are G3. Residues 113 to 117 (DTPGH) and 168 to 171 (NKMD) contribute to the GTP site. Residues 168–171 (NKMD) form a G4 region. A G5 region spans residues 206 to 208 (SAL).

It belongs to the TRAFAC class translation factor GTPase superfamily. Classic translation factor GTPase family. CysN/NodQ subfamily. In terms of assembly, heterodimer composed of CysD, the smaller subunit, and CysN.

The catalysed reaction is sulfate + ATP + H(+) = adenosine 5'-phosphosulfate + diphosphate. It functions in the pathway sulfur metabolism; hydrogen sulfide biosynthesis; sulfite from sulfate: step 1/3. Functionally, with CysD forms the ATP sulfurylase (ATPS) that catalyzes the adenylation of sulfate producing adenosine 5'-phosphosulfate (APS) and diphosphate, the first enzymatic step in sulfur assimilation pathway. APS synthesis involves the formation of a high-energy phosphoric-sulfuric acid anhydride bond driven by GTP hydrolysis by CysN coupled to ATP hydrolysis by CysD. This Escherichia coli O127:H6 (strain E2348/69 / EPEC) protein is Sulfate adenylyltransferase subunit 1.